Here is an 878-residue protein sequence, read N- to C-terminus: MADMYASLRSNVGTLGQILGETIRTNLDDAFLEKIEQIRQLAKSSRQGDEAARDEMLKLLTALPDNELVPFAKAFNQFLNLANIAEQFHTISRNCDELVCVPDPVEQLLGRVLSSNIDQEKMLDCLENLDIDLVLTAHPTEISRRTLIQKYASVIDILAALENPQLTEREKKQQHLRLRQLIAQIWHTNEIRNERPTPVDEARWGLSTIEVSLWQAIPDFLRQLNEQVEERTGKQLPTDIAPVRFSSWMGGDRDGNPFVTAKVTQEVLDRNRHTAARLYLKDIVVLVNDLSVEEANAELLEYTNNSLEPYRDVLKDLRQKLRNTVDYLNARLEGHSPEIDLSSIIWHESDLKEPLLMLYRSLTDSGMSLIAHGLLLDILRRIACFGIHMLRLDIRQDAERHSDVIAELTRYLGMGDYNHWDESEKQAFLLRELTGKRPLIPSNWQPSDDVAEVVSTCRLIATQPARALGSYVISMASKPSDVLTVLLLLKETGCPHPMRVVPLFETLDDLNNASSCMTALFAIDWYRGYTKGHQEVMIGYSDSAKDAGVMAAAWAQYHAQEELVEVSRQAEVKLTLFHGRGGTIGRGGGPAHEAILSQPPGSVDGRIRVTEQGEMIRFKFGLPKLAVQSLALYTSAVMEATLLPPPEPKPEWRACMQKLAEESVDAYRSIVRDEPDFVAYFRAATPEVELGKLPLGSRPAKRRVDGGIESLRAIPWIFAWSQNRLMLPAWLGAGEALQAASDRGEMALLQEMEQDWPFFKTRISMLEMVYAKAEPNLAKYYETCLVPENLHHLGEALRTRLATGIKAVLELTQSNALMEHTPWNRESVTLRNPYIDPLNFVQAELLARTRKEEEASTNVELALMITIAGVAAGMRNTG.

Residues H138 and K545 contribute to the active site.

This sequence belongs to the PEPCase type 1 family. Requires Mg(2+) as cofactor.

The enzyme catalyses oxaloacetate + phosphate = phosphoenolpyruvate + hydrogencarbonate. Functionally, forms oxaloacetate, a four-carbon dicarboxylic acid source for the tricarboxylic acid cycle. This Shewanella sediminis (strain HAW-EB3) protein is Phosphoenolpyruvate carboxylase.